The following is a 608-amino-acid chain: Granule-bound starch synthase 1, chloroplastic/amyloplastic (608 aa).

The N-terminal 76 residues, 1-76 (MATITASHFV…EGGMAAGTIV (76 aa)), are a transit peptide targeting the chloroplast. K96 serves as a coordination point for ADP-alpha-D-glucose.

It belongs to the glycosyltransferase 1 family. Bacterial/plant glycogen synthase subfamily.

It localises to the plastid. The protein localises to the chloroplast. It is found in the amyloplast. The catalysed reaction is an NDP-alpha-D-glucose + [(1-&gt;4)-alpha-D-glucosyl](n) = [(1-&gt;4)-alpha-D-glucosyl](n+1) + a ribonucleoside 5'-diphosphate + H(+). It participates in glycan biosynthesis; starch biosynthesis. Its function is as follows. Required for the synthesis of amylose. The chain is Granule-bound starch synthase 1, chloroplastic/amyloplastic (WAXY) from Ipomoea batatas (Sweet potato).